The following is a 417-amino-acid chain: Exodeoxyribonuclease 7 large subunit (417 aa).

The protein belongs to the XseA family. As to quaternary structure, heterooligomer composed of large and small subunits.

It is found in the cytoplasm. It carries out the reaction Exonucleolytic cleavage in either 5'- to 3'- or 3'- to 5'-direction to yield nucleoside 5'-phosphates.. Bidirectionally degrades single-stranded DNA into large acid-insoluble oligonucleotides, which are then degraded further into small acid-soluble oligonucleotides. In Corynebacterium glutamicum (strain ATCC 13032 / DSM 20300 / JCM 1318 / BCRC 11384 / CCUG 27702 / LMG 3730 / NBRC 12168 / NCIMB 10025 / NRRL B-2784 / 534), this protein is Exodeoxyribonuclease 7 large subunit.